Here is a 380-residue protein sequence, read N- to C-terminus: Elongation factor Ts, mitochondrial (380 aa).

This sequence belongs to the EF-Ts family.

The protein localises to the mitochondrion. Functionally, associates with the EF-Tu.GDP complex and induces the exchange of GDP to GTP. It remains bound to the aminoacyl-tRNA.EF-Tu.GTP complex up to the GTP hydrolysis stage on the ribosome. This Plasmodium chabaudi chabaudi protein is Elongation factor Ts, mitochondrial.